The sequence spans 213 residues: NADH-quinone oxidoreductase subunit C (213 aa).

This sequence belongs to the complex I 30 kDa subunit family. NDH-1 is composed of 14 different subunits. Subunits NuoB, C, D, E, F, and G constitute the peripheral sector of the complex.

Its subcellular location is the cell inner membrane. It catalyses the reaction a quinone + NADH + 5 H(+)(in) = a quinol + NAD(+) + 4 H(+)(out). NDH-1 shuttles electrons from NADH, via FMN and iron-sulfur (Fe-S) centers, to quinones in the respiratory chain. The immediate electron acceptor for the enzyme in this species is believed to be ubiquinone. Couples the redox reaction to proton translocation (for every two electrons transferred, four hydrogen ions are translocated across the cytoplasmic membrane), and thus conserves the redox energy in a proton gradient. The protein is NADH-quinone oxidoreductase subunit C of Rhodospirillum rubrum (strain ATCC 11170 / ATH 1.1.1 / DSM 467 / LMG 4362 / NCIMB 8255 / S1).